Consider the following 115-residue polypeptide: Somatostatin-1 (115 aa).

A signal peptide spans 1–24 (MQSCRVQCALTLLSLALAINSISA). Positions 25–99 (APTDPRLRQF…NSSPALAPRE (75 aa)) are excised as a propeptide. The tract at residues 60 to 79 (SQTDNEALESDDLPRGAEQD) is disordered. A disulfide bond links Cys-104 and Cys-115.

It belongs to the somatostatin family.

It localises to the secreted. Somatostatin inhibits the release of somatotropin. The polypeptide is Somatostatin-1 (sst1) (Pelophylax ridibundus (Marsh frog)).